Here is a 383-residue protein sequence, read N- to C-terminus: Phospho-N-acetylmuramoyl-pentapeptide-transferase (383 aa).

9 helical membrane passes run 26-46 (TAGA…GVIE), 73-93 (TMGG…WAEL), 98-118 (IILL…DDFL), 131-151 (IYKI…LYYF), 182-202 (IFLP…IPFA), 221-241 (GLAI…SYVS), 258-278 (AGEV…FLWF), 283-305 (AQVF…IALF), and 360-380 (QVVF…IATL).

The protein belongs to the glycosyltransferase 4 family. MraY subfamily. Mg(2+) is required as a cofactor.

The protein resides in the cell inner membrane. It carries out the reaction UDP-N-acetyl-alpha-D-muramoyl-L-alanyl-gamma-D-glutamyl-meso-2,6-diaminopimeloyl-D-alanyl-D-alanine + di-trans,octa-cis-undecaprenyl phosphate = di-trans,octa-cis-undecaprenyl diphospho-N-acetyl-alpha-D-muramoyl-L-alanyl-D-glutamyl-meso-2,6-diaminopimeloyl-D-alanyl-D-alanine + UMP. Its pathway is cell wall biogenesis; peptidoglycan biosynthesis. Its function is as follows. Catalyzes the initial step of the lipid cycle reactions in the biosynthesis of the cell wall peptidoglycan: transfers peptidoglycan precursor phospho-MurNAc-pentapeptide from UDP-MurNAc-pentapeptide onto the lipid carrier undecaprenyl phosphate, yielding undecaprenyl-pyrophosphoryl-MurNAc-pentapeptide, known as lipid I. The chain is Phospho-N-acetylmuramoyl-pentapeptide-transferase from Brachyspira hyodysenteriae (strain ATCC 49526 / WA1).